A 178-amino-acid polypeptide reads, in one-letter code: Large ribosomal subunit protein bL25 (178 aa).

Belongs to the bacterial ribosomal protein bL25 family. CTC subfamily. In terms of assembly, part of the 50S ribosomal subunit; part of the 5S rRNA/L5/L18/L25 subcomplex. Contacts the 5S rRNA. Binds to the 5S rRNA independently of L5 and L18.

Functionally, this is one of the proteins that binds to the 5S RNA in the ribosome where it forms part of the central protuberance. This Helicobacter pylori (strain HPAG1) protein is Large ribosomal subunit protein bL25.